A 293-amino-acid chain; its full sequence is Cytidine deaminase (293 aa).

CMP/dCMP-type deaminase domains follow at residues 47-166 (EDRA…FGPA) and 186-293 (ESED…YQAV). A substrate-binding site is contributed by 88–90 (NME). Position 101 (His101) interacts with Zn(2+). Glu103 (proton donor) is an active-site residue. The Zn(2+) site is built by Cys128 and Cys131.

It belongs to the cytidine and deoxycytidylate deaminase family. In terms of assembly, homodimer. Zn(2+) is required as a cofactor.

It catalyses the reaction cytidine + H2O + H(+) = uridine + NH4(+). The catalysed reaction is 2'-deoxycytidine + H2O + H(+) = 2'-deoxyuridine + NH4(+). In terms of biological role, this enzyme scavenges exogenous and endogenous cytidine and 2'-deoxycytidine for UMP synthesis. This chain is Cytidine deaminase, found in Aeromonas salmonicida (strain A449).